The sequence spans 457 residues: MITMTNWESLYEKALDKVEASIRKVRGVLLAYNTNIDAIKYLKREDLEKRIEKVGKEEVLRYSEELPKEIETIPQLLGSILWSIKRGKAAELLVVSREVREYMRKWGWDELRMGGQVGIMANLLGGVYGIPVIAHVPQLSELQASLFLDGPIYVPTFERGELRLIHPREFRKGEEDCIHYIYEFPRNFKVLDFEAPRENRFIGAADDYNPILYVREEWIERFEEIAKRSELAIISGLHPLTQENHGKPIKLVREHLKILNDLGIRAHLEFAFTPDEVVRLEIVKLLKHFYSVGLNEVELASVVSVMGEKELAERIISKDPADPIAVIEGLLKLIKETGVKRIHFHTYGYYLALTREKGEHVRDALLFSALAAATKAMKGNIEKLSDIREGLAVPIGEQGLEVEKILEKEFSLRDGIGSIEDYQLTFIPTKVVKKPKSTVGIGDTISSSAFVSEFSLH.

Positions 5–457 constitute an ADPK domain; it reads TNWESLYEKA…SAFVSEFSLH (453 aa). Residues Asp-37, Glu-91, 115 to 116, and His-179 contribute to the D-glucose site; that span reads GQ. Glu-269 is a binding site for Mg(2+). Residue Asn-295 coordinates ADP. Glu-298 is a binding site for Mg(2+). ADP contacts are provided by residues 345–346, Val-432, and Gly-442; that span reads HT. Asp-443 provides a ligand contact to D-glucose. Asp-443 lines the Mg(2+) pocket. Asp-443 acts as the Proton acceptor in catalysis.

It belongs to the ADP-dependent glucokinase family. The cofactor is Mg(2+).

It is found in the cytoplasm. It carries out the reaction D-glucose + ADP = D-glucose 6-phosphate + AMP + H(+). It catalyses the reaction D-glucosamine + ADP = D-glucosamine 6-phosphate + AMP + H(+). It functions in the pathway carbohydrate degradation; glycolysis. Its activity is regulated as follows. Inhibited by 8-bromoadenosine phosphate (8-Br-AMP). Catalyzes the ADP-dependent phosphorylation of D-glucose to D-glucose 6-phosphate and glucosamine to glucosamine 6-phosphate. This Pyrococcus horikoshii (strain ATCC 700860 / DSM 12428 / JCM 9974 / NBRC 100139 / OT-3) protein is ADP-dependent glucose/glucosamine kinase.